A 479-amino-acid polypeptide reads, in one-letter code: Ribosomal RNA small subunit methyltransferase F (479 aa).

S-adenosyl-L-methionine contacts are provided by residues 125–131 (AAAPGSK), E149, D176, and D194. C247 acts as the Nucleophile in catalysis.

Belongs to the class I-like SAM-binding methyltransferase superfamily. RsmB/NOP family.

The protein resides in the cytoplasm. It carries out the reaction cytidine(1407) in 16S rRNA + S-adenosyl-L-methionine = 5-methylcytidine(1407) in 16S rRNA + S-adenosyl-L-homocysteine + H(+). Specifically methylates the cytosine at position 1407 (m5C1407) of 16S rRNA. This chain is Ribosomal RNA small subunit methyltransferase F, found in Salmonella enteritidis PT4 (strain P125109).